Consider the following 356-residue polypeptide: Epoxide hydrolase B (356 aa).

The AB hydrolase-1 domain maps to 28–129 (PLVVLLHGFP…RCAGVVGISV (102 aa)). Residue aspartate 104 is the Nucleophile of the active site. The active-site Proton acceptor is histidine 333.

It belongs to the AB hydrolase superfamily. Epoxide hydrolase family. Homodimer.

The enzyme catalyses an epoxide + H2O = an ethanediol. Its function is as follows. Could be involved in detoxification of extraneous host-cell epoxides. Catalyzes the hydrolysis of small aromatic epoxide-containing substrates such as trans-1,3-diphenylpropene oxide, trans and cis-stilbene oxide, and terpenoid epoxide. The protein is Epoxide hydrolase B of Mycobacterium tuberculosis (strain CDC 1551 / Oshkosh).